Reading from the N-terminus, the 427-residue chain is tRNA(Ile)-lysidine synthase (427 aa).

Residue 25-30 participates in ATP binding; that stretch reads SGGLDS.

It belongs to the tRNA(Ile)-lysidine synthase family.

The protein localises to the cytoplasm. It catalyses the reaction cytidine(34) in tRNA(Ile2) + L-lysine + ATP = lysidine(34) in tRNA(Ile2) + AMP + diphosphate + H(+). Ligates lysine onto the cytidine present at position 34 of the AUA codon-specific tRNA(Ile) that contains the anticodon CAU, in an ATP-dependent manner. Cytidine is converted to lysidine, thus changing the amino acid specificity of the tRNA from methionine to isoleucine. This is tRNA(Ile)-lysidine synthase from Histophilus somni (strain 2336) (Haemophilus somnus).